We begin with the raw amino-acid sequence, 529 residues long: MSLNDYPQQVNKRRTFAIISHPDAGKTTITEKVLLYGQAIQTAGSVKGKGSSTHAKSDWMEMEKQRGISITTSVMQFPYNDCLVNLLDTPGHEDFSEDTYRTLTAVDSCLMVIDSAKGVEERTIKLMEVTRLRDTPILTFMNKLDRDIRDPMELLDEVENVLNIHCAPITWPIGCGKLFKGVYHLYKDETYLYQTGQGHTIQEKRVIKGLDNPELDAAVGDDLAQQLRDELELVQGASNEFDLDAFLQGELTPVFFGTALGNFGVDHFLDGLTQWAPAPQSRQADSRAVASSEQKLTGFVFKIQANMDPKHRDRVAFMRVVSGKYEKGMKLRHVRLGKDVVISDALTFMAGDRSHAEEAYAGDIIGLHNHGTIQIGDTFTQGEELKFTGIPNFAPELFRRIRLKDPLKQKQLLKGLVQLSEEGAVQVFRPLMNNDLIVGAVGVLQFDVVVSRLKSEYNVEAIYENINVATARWVECSDAKKFDEFKRKNEQNLALDGGDNLTYIAPTMVNLNLAQERYPDVKFFKTREH.

In terms of domain architecture, tr-type G spans Asn11–Gln280. GTP is bound by residues Ser20–Thr27, Asp88–His92, and Asn142–Asp145.

This sequence belongs to the TRAFAC class translation factor GTPase superfamily. Classic translation factor GTPase family. PrfC subfamily.

The protein resides in the cytoplasm. Increases the formation of ribosomal termination complexes and stimulates activities of RF-1 and RF-2. It binds guanine nucleotides and has strong preference for UGA stop codons. It may interact directly with the ribosome. The stimulation of RF-1 and RF-2 is significantly reduced by GTP and GDP, but not by GMP. The protein is Peptide chain release factor 3 (prfC) of Pasteurella multocida (strain Pm70).